Consider the following 1446-residue polypeptide: E3 ubiquitin-protein ligase listerin (1446 aa).

HEAT repeat units lie at residues 71–108 (QTRE…LTTD), 115–153 (MLTM…VTNG), 324–361 (SLQK…LLQK), 363–399 (ENPA…TFSD), 413–450 (EILK…WIIE), 630–669 (AENV…AEDE), 684–721 (GDFE…FCDA), 1046–1083 (LRAL…PAFQ), 1107–1144 (SVAR…KLSL), 1165–1202 (LLDL…NALN), and 1251–1289 (FKSM…RLLI). The segment at 1395 to 1442 (CTICMMTVHQQTHQLPKIKCKQCKNKFHSNCLYKWFESSNQSTCPLCR) adopts an RING-type zinc-finger fold.

Belongs to the LTN1 family. In terms of assembly, component of the ribosome quality control complex (RQC), composed of at least the E3 ubiquitin ligase ltn1 and nemf. The complex probably also contains tcf25 as well as vcp/p97 and its ubiquitin-binding cofactors. RQC forms a stable complex with 60S ribosomal subunits.

The protein localises to the cytoplasm. The protein resides in the cytosol. It catalyses the reaction S-ubiquitinyl-[E2 ubiquitin-conjugating enzyme]-L-cysteine + [acceptor protein]-L-lysine = [E2 ubiquitin-conjugating enzyme]-L-cysteine + N(6)-ubiquitinyl-[acceptor protein]-L-lysine.. The protein operates within protein modification; protein ubiquitination. Its function is as follows. E3 ubiquitin-protein ligase. Component of the ribosome quality control complex (RQC), a ribosome-associated complex that mediates ubiquitination and extraction of incompletely synthesized nascent chains for proteasomal degradation. Ubiquitination leads to vcp/p97 recruitment for extraction and degradation of the incomplete translation product. The sequence is that of E3 ubiquitin-protein ligase listerin from Caenorhabditis elegans.